Consider the following 361-residue polypeptide: Sensor protein VanSC (361 aa).

2 helical membrane-spanning segments follow: residues 16 to 36 and 59 to 79; these read FVTT…IRFI and WLFC…IYYM. Residues 144 to 359 enclose the Histidine kinase domain; the sequence is YLAHDLRTPL…IFNVRLPKPA (216 aa). His147 is subject to Phosphohistidine; by autocatalysis. Glu252 contacts Mg(2+).

Post-translationally, autophosphorylated.

The protein resides in the membrane. It catalyses the reaction ATP + protein L-histidine = ADP + protein N-phospho-L-histidine.. The polypeptide is Sensor protein VanSC (Enterococcus gallinarum).